The sequence spans 78 residues: Putative membrane protein insertion efficiency factor (78 aa).

This sequence belongs to the UPF0161 family.

It localises to the cell inner membrane. Its function is as follows. Could be involved in insertion of integral membrane proteins into the membrane. The polypeptide is Putative membrane protein insertion efficiency factor (Prochlorococcus marinus subsp. pastoris (strain CCMP1986 / NIES-2087 / MED4)).